Consider the following 215-residue polypeptide: Protein slowmo (215 aa).

One can recognise a PRELI/MSF1 domain in the interval 1-170; sequence MKIWTSEHIF…VIGLINTEVK (170 aa).

It belongs to the slowmo family. In terms of tissue distribution, expressed in specific tissues such as the developing central nervous system (CNS) and both the male and female germline. In the CNS, it is restricted in a subset of cells during embryogenesis and early larval development. In embryos, it is also expressed in salivary glands. In the testis, expressed in somatic cyst cells throughout the distal region where the mitotic cysts develop, extending through to meiotic cysts.

It is found in the mitochondrion. Its function is as follows. Required to regulate peristaltic movement and also for germline proliferation in males and females. The polypeptide is Protein slowmo (slmo) (Drosophila melanogaster (Fruit fly)).